The following is a 141-amino-acid chain: Large ribosomal subunit protein uL11 (141 aa).

Belongs to the universal ribosomal protein uL11 family. As to quaternary structure, part of the ribosomal stalk of the 50S ribosomal subunit. Interacts with L10 and the large rRNA to form the base of the stalk. L10 forms an elongated spine to which L12 dimers bind in a sequential fashion forming a multimeric L10(L12)X complex. One or more lysine residues are methylated.

Forms part of the ribosomal stalk which helps the ribosome interact with GTP-bound translation factors. This chain is Large ribosomal subunit protein uL11, found in Fervidobacterium nodosum (strain ATCC 35602 / DSM 5306 / Rt17-B1).